A 377-amino-acid polypeptide reads, in one-letter code: Bradyzoite pseudokinase 1 (377 aa).

The first 26 residues, 1-26 (MANTSVRRRQLLSSVLLLQWLTTVLG), serve as a signal peptide directing secretion. Positions 39–58 (HGQFPSLRRTEGVSQSGSGH) are disordered. The Protein kinase domain maps to 48–354 (TEGVSQSGSG…IEEIMKDPLF (307 aa)).

This sequence belongs to the protein kinase superfamily. STE Ser/Thr protein kinase family. WNG subfamily. As to quaternary structure, forms a complex composed of BPK1, MCP4, MAG1, GRA8 and GRA9. Interacts with MCP4. Interacts with MAG1. Interacts with GRA8. Interacts with GRA9.

It is found in the secreted. Its function is as follows. Required for the growth, maintenance, and/or stability, and thus infectivity, of bradyzoite cysts. The protein is Bradyzoite pseudokinase 1 of Toxoplasma gondii.